A 321-amino-acid polypeptide reads, in one-letter code: Protein APA1 (321 aa).

The tract at residues 50 to 70 (SLIEKPERGQTPEGEDPLGKP) is disordered. Residue K54 coordinates substrate. The residue at position 60 (T60) is a Phosphothreonine. Substrate is bound by residues 93–94 (NK), N145, and 151–154 (GSSL). H158 (nucleophile) is an active-site residue. Residues Q160, 273–275 (NST), M280, and K284 contribute to the substrate site.

It belongs to the ATP adenylyltransferase family. In terms of assembly, monomer. The cofactor is a divalent metal cation. Post-translationally, the N-terminus is blocked.

The protein resides in the cytoplasm. Its subcellular location is the nucleus. It catalyses the reaction ADP + ATP + H(+) = P(1),P(4)-bis(5'-adenosyl) tetraphosphate + phosphate. It carries out the reaction sulfate + ADP + H(+) = adenosine 5'-phosphosulfate + phosphate. Ap4A phosphorylase catalyzes the phosphorolytic degradation of bis(5'-adenosyl) tetraphosphate (Ap4A) into ADP and ATP. Can also use other Np4N' nucleotides (where N and N' stand for A,C,G or U) as substrates with equal efficiency. Cannot catalyze the reverse reaction. Additionally, this enzyme can also catalyze the phosphorolytic degradation of adenosine 5'-phosphosulfate (AMPS) into ADP and sulfate, the reversible exchange reaction between inorganic phosphate and the beta-phosphate of a nucleoside diphosphate (NDP), and the synthesis of Ap4A from AMPS plus ATP. This Saccharomyces cerevisiae (strain ATCC 204508 / S288c) (Baker's yeast) protein is Protein APA1.